A 217-amino-acid polypeptide reads, in one-letter code: Thiamine-phosphate synthase (217 aa).

4-amino-2-methyl-5-(diphosphooxymethyl)pyrimidine is bound by residues 42-46 (QYRDK) and Asp77. Residues Asp78 and Asp97 each coordinate Mg(2+). A 4-amino-2-methyl-5-(diphosphooxymethyl)pyrimidine-binding site is contributed by Ser116. 143 to 145 (TTS) lines the 2-[(2R,5Z)-2-carboxy-4-methylthiazol-5(2H)-ylidene]ethyl phosphate pocket. 4-amino-2-methyl-5-(diphosphooxymethyl)pyrimidine is bound at residue Lys146. 2-[(2R,5Z)-2-carboxy-4-methylthiazol-5(2H)-ylidene]ethyl phosphate is bound by residues Gly174 and 194 to 195 (IS).

It belongs to the thiamine-phosphate synthase family. It depends on Mg(2+) as a cofactor.

It carries out the reaction 2-[(2R,5Z)-2-carboxy-4-methylthiazol-5(2H)-ylidene]ethyl phosphate + 4-amino-2-methyl-5-(diphosphooxymethyl)pyrimidine + 2 H(+) = thiamine phosphate + CO2 + diphosphate. The catalysed reaction is 2-(2-carboxy-4-methylthiazol-5-yl)ethyl phosphate + 4-amino-2-methyl-5-(diphosphooxymethyl)pyrimidine + 2 H(+) = thiamine phosphate + CO2 + diphosphate. It catalyses the reaction 4-methyl-5-(2-phosphooxyethyl)-thiazole + 4-amino-2-methyl-5-(diphosphooxymethyl)pyrimidine + H(+) = thiamine phosphate + diphosphate. The protein operates within cofactor biosynthesis; thiamine diphosphate biosynthesis; thiamine phosphate from 4-amino-2-methyl-5-diphosphomethylpyrimidine and 4-methyl-5-(2-phosphoethyl)-thiazole: step 1/1. Condenses 4-methyl-5-(beta-hydroxyethyl)thiazole monophosphate (THZ-P) and 2-methyl-4-amino-5-hydroxymethyl pyrimidine pyrophosphate (HMP-PP) to form thiamine monophosphate (TMP). The sequence is that of Thiamine-phosphate synthase from Lactiplantibacillus plantarum (strain ATCC BAA-793 / NCIMB 8826 / WCFS1) (Lactobacillus plantarum).